Reading from the N-terminus, the 63-residue chain is Hyphancin-3G (63 aa).

A signal peptide spans 1–22 (MNFSRILFFMFACFVALASVSA). Positions 23-26 (VPEP) are cleaved as a propeptide — removed by a dipeptidylpeptidase. At Leu-61 the chain carries Leucine amide.

It belongs to the cecropin family.

The protein resides in the secreted. In terms of biological role, has antibacterial activity. The protein is Hyphancin-3G of Hyphantria cunea (Fall webworm moth).